We begin with the raw amino-acid sequence, 61 residues long: Sperm protamine P1 (61 aa).

The interval 1–61 (MARYRRRSRS…RRYSRRGRRR (61 aa)) is disordered.

Belongs to the protamine P1 family. Testis.

The protein localises to the nucleus. It is found in the chromosome. In terms of biological role, protamines substitute for histones in the chromatin of sperm during the haploid phase of spermatogenesis. They compact sperm DNA into a highly condensed, stable and inactive complex. The chain is Sperm protamine P1 (PRM1) from Dasyurus hallucatus (Northern quoll).